Here is a 1040-residue protein sequence, read N- to C-terminus: Vacuolar membrane protease (1040 aa).

Topologically, residues 1–9 are cytoplasmic; that stretch reads MINPISFRP. Residues 10-30 form a helical membrane-spanning segment; sequence GPVTFWTTLIYLALLIPIVII. Residues 31-405 are Vacuolar-facing; the sequence is NEEPPAAPKT…SFVLFGLRGM (375 aa). 4 N-linked (GlcNAc...) asparagine glycosylation sites follow: asparagine 48, asparagine 117, asparagine 120, and asparagine 129. 2 residues coordinate Zn(2+): histidine 186 and aspartate 198. Glutamate 232 (proton acceptor) is an active-site residue. Positions 233, 258, and 331 each coordinate Zn(2+). Residues 406-426 traverse the membrane as a helical segment; the sequence is FAWSLTLLIATPLILVGITWL. Residues 427–436 are Cytoplasmic-facing; the sequence is LRNLDKDYFF. Residues 437–456 form a helical membrane-spanning segment; that stretch reads TSTVKTKEHPEYEAVPIGGW. The Vacuolar portion of the chain corresponds to 457 to 462; that stretch reads KGFFRW. The helical transmembrane segment at 463-483 threads the bilayer; that stretch reads AMMVSIFYFSFWMIMRGANFV. The Cytoplasmic segment spans residues 484–490; that stretch reads RPSALHR. The helical transmembrane segment at 491–511 threads the bilayer; it reads GYANLWLFVFGWIVLVAVTAL. Residues 512–521 are Vacuolar-facing; sequence EDRRRIAAGY. A helical transmembrane segment spans residues 522-542; sequence IFVFLESAIFLSCLISFVELL. Topologically, residues 543–715 are cytoplasmic; it reads ALPRKSAYAL…YEHEQDWSGH (173 aa). The disordered stretch occupies residues 563–680; sequence HSGYQGYRDS…NGTNDRGRTT (118 aa). Low complexity-rich tracts occupy residues 577 to 594 and 616 to 626; these read SSGA…PSSP and APSVAAHSSQP. Polar residues predominate over residues 636-647; that stretch reads GRSTSAPIPSTT. The span at 650-661 shows a compositional bias: acidic residues; the sequence is DEDESEDDDDEA. A helical membrane pass occupies residues 716 to 736; that stretch reads LPSWAWFFQFLLLGPFMIILA. Residues 737-758 lie on the Vacuolar side of the membrane; that stretch reads AQTGLMLTDAVYQTGSDGSKLF. A helical transmembrane segment spans residues 759-779; the sequence is TPYLMIFFFTLLLILPLTPFI. Over 780-785 the chain is Cytoplasmic; the sequence is HRVTHH. Residues 786–806 traverse the membrane as a helical segment; it reads IPVFLLVVFIVTLTYNLIAFP. At 807–1040 the chain is on the vacuolar side; that stretch reads FSANNRYKAF…VEGRKAFKIV (234 aa). N-linked (GlcNAc...) asparagine glycosylation is present at asparagine 900.

It belongs to the peptidase M28 family. Zn(2+) is required as a cofactor.

It localises to the vacuole membrane. Functionally, may be involved in vacuolar sorting and osmoregulation. The chain is Vacuolar membrane protease from Sordaria macrospora (strain ATCC MYA-333 / DSM 997 / K(L3346) / K-hell).